A 459-amino-acid chain; its full sequence is Transmembrane protein 143 (459 aa).

2 helical membrane passes run 280 to 300 (LLNLMLVVSGVAIFVNVGMVV) and 301 to 321 (LTDLKVATSLLLLLFAIFMGL). Phosphoserine is present on Ser332. The interval 435-459 (GFPKLDPVAPITSEPPQATPSSNIS) is disordered. Positions 448–459 (EPPQATPSSNIS) are enriched in polar residues.

Its subcellular location is the membrane. The chain is Transmembrane protein 143 (TMEM143) from Homo sapiens (Human).